The primary structure comprises 325 residues: MELEFLGTGAGQPSKQRNVTSIALRLLDERNEVWLFDVGEATQHQLLKSNTRSRKVTKIFITHMHGDHIFGLPGFLTSRNFQGSELIDGGKPTDVTIYGPAGLQQYVFSVLRAAQVRLQYRINFIQVRPGIIFEDQQFAVSAFPMNHGIEDYAYRVVEKDTVGQLQVEKLLKLGLKSGPLFGKIKAGEIVKLENGLTINGKDFLGPDRPGRIIAIVLDTKDTPEIIKAAEQADVLVHEATYGAENSIMAKRHGHSTSLQAAEHARAAHAHQLILTHISARYLGKMADQLVKQAKNVFRPTYIAHDLEIFDIPAKKSERKDKIDVG.

The Zn(2+) site is built by His63, His65, Asp67, His68, His147, Asp218, and His276. Catalysis depends on Asp67, which acts as the Proton acceptor.

The protein belongs to the RNase Z family. In terms of assembly, homodimer. It depends on Zn(2+) as a cofactor.

It catalyses the reaction Endonucleolytic cleavage of RNA, removing extra 3' nucleotides from tRNA precursor, generating 3' termini of tRNAs. A 3'-hydroxy group is left at the tRNA terminus and a 5'-phosphoryl group is left at the trailer molecule.. Zinc phosphodiesterase, which displays some tRNA 3'-processing endonuclease activity. Probably involved in tRNA maturation, by removing a 3'-trailer from precursor tRNA. The polypeptide is Ribonuclease Z (Oenococcus oeni (strain ATCC BAA-331 / PSU-1)).